The following is a 214-amino-acid chain: Rac-like GTP-binding protein 1 (214 aa).

Residues 17–24 (GDGAVGKT), 20–25 (AVGKTC), threonine 42, 64–68 (DTAGQ), glycine 67, 122–125 (TKLD), 123–125 (KLD), and 164–165 (SK) each bind GTP. The short motif at 39-47 (YIPTVFDNF) is the Effector region element.

Belongs to the small GTPase superfamily. Rho family. As to quaternary structure, may interact with MPK1/MAPK6. Binds to RBOHB, preferentially in the GTP-bound form. Interacts with CCR1 in a GTP-dependent manner. May be palmitoylated.

It is found in the cytoplasm. Its subcellular location is the membrane. Its function is as follows. Small GTPase playing a general role in disease resistance signaling pathway. Acts downstream of heterotrimeric G protein alpha subunit. Regulates cell death and reactive oxygen species production, probably through NADPH oxidase. Also involved in sphingolipid elicitor (SE)-dependent defense signaling. Activates phytoalexin production and alters defense-related genes. Down-regulates metallothionein 2b, a reactive oxygen scavenger. May control lignin synthesis through regulation of both NADPH oxidase and CCR1 activities during defense responses. Stimulates lignin synthesis in suspension cell culture. The polypeptide is Rac-like GTP-binding protein 1 (RAC1) (Oryza sativa subsp. japonica (Rice)).